Consider the following 385-residue polypeptide: S-adenosylmethionine synthase (385 aa).

Residue His16 coordinates ATP. Asp18 is a Mg(2+) binding site. Glu44 serves as a coordination point for K(+). L-methionine is bound by residues Glu57 and Gln100. A flexible loop region spans residues 100–110 (QSPDINQGVDK). ATP contacts are provided by residues 165–167 (DAK), 231–232 (RF), Asp240, 246–247 (RK), Ala263, and Lys267. L-methionine is bound at residue Asp240. Residue Lys271 participates in L-methionine binding.

This sequence belongs to the AdoMet synthase family. As to quaternary structure, homotetramer; dimer of dimers. Mg(2+) serves as cofactor. The cofactor is K(+).

It localises to the cytoplasm. It carries out the reaction L-methionine + ATP + H2O = S-adenosyl-L-methionine + phosphate + diphosphate. It functions in the pathway amino-acid biosynthesis; S-adenosyl-L-methionine biosynthesis; S-adenosyl-L-methionine from L-methionine: step 1/1. Catalyzes the formation of S-adenosylmethionine (AdoMet) from methionine and ATP. The overall synthetic reaction is composed of two sequential steps, AdoMet formation and the subsequent tripolyphosphate hydrolysis which occurs prior to release of AdoMet from the enzyme. This is S-adenosylmethionine synthase from Vibrio cholerae serotype O1 (strain ATCC 39315 / El Tor Inaba N16961).